The sequence spans 414 residues: Histidine--tRNA ligase (414 aa).

The protein belongs to the class-II aminoacyl-tRNA synthetase family. In terms of assembly, homodimer.

It is found in the cytoplasm. The enzyme catalyses tRNA(His) + L-histidine + ATP = L-histidyl-tRNA(His) + AMP + diphosphate + H(+). This Ehrlichia ruminantium (strain Gardel) protein is Histidine--tRNA ligase.